The following is a 156-amino-acid chain: Small ribosomal subunit protein uS7 (156 aa).

It belongs to the universal ribosomal protein uS7 family. In terms of assembly, part of the 30S ribosomal subunit. Contacts proteins S9 and S11.

Its function is as follows. One of the primary rRNA binding proteins, it binds directly to 16S rRNA where it nucleates assembly of the head domain of the 30S subunit. Is located at the subunit interface close to the decoding center, probably blocks exit of the E-site tRNA. The polypeptide is Small ribosomal subunit protein uS7 (Treponema pallidum (strain Nichols)).